The following is a 163-amino-acid chain: Protein VASCULATURE COMPLEXITY AND CONNECTIVITY (163 aa).

An N-terminal signal peptide occupies residues M1–A27. 3 consecutive transmembrane segments (helical) span residues L54–G74, M95–G115, and F133–V153.

Belongs to the DESIGUAL family. In terms of assembly, interacts with OPS. As to expression, expressed in vascular cells, mostly in hypocotyls, and, to a lower extent, in seedlings, roots, flowers, siliques, developing leaves and inflorescences, but barely in mature leaves and seeds. High levels in leaf primordia.

Its subcellular location is the endoplasmic reticulum membrane. Functionally, required, together with OPS, for embryo provasculature development and cotyledon vascular complexity and connectivity. Necessary, partially redundantly with DEAL2 and DEAL3, to ensure bilateral symmetry development and early leaf margin patterning, probably via the regulation of auxin and CUC2 distribution. Regulates cell proliferation but not cell expansion. This is Protein VASCULATURE COMPLEXITY AND CONNECTIVITY from Arabidopsis thaliana (Mouse-ear cress).